We begin with the raw amino-acid sequence, 106 residues long: A-type ATP synthase subunit F (106 aa).

Belongs to the V-ATPase F subunit family. In terms of assembly, has multiple subunits with at least A(3), B(3), C, D, E, F, H, I and proteolipid K(x).

The protein localises to the cell membrane. Component of the A-type ATP synthase that produces ATP from ADP in the presence of a proton gradient across the membrane. This is A-type ATP synthase subunit F from Methanosphaera stadtmanae (strain ATCC 43021 / DSM 3091 / JCM 11832 / MCB-3).